We begin with the raw amino-acid sequence, 352 residues long: UDP-N-acetylglucosamine--N-acetylmuramyl-(pentapeptide) pyrophosphoryl-undecaprenol N-acetylglucosamine transferase (352 aa).

UDP-N-acetyl-alpha-D-glucosamine-binding residues include S195 and Q287.

This sequence belongs to the glycosyltransferase 28 family. MurG subfamily.

The protein resides in the cell membrane. The enzyme catalyses Mur2Ac(oyl-L-Ala-gamma-D-Glu-L-Lys-D-Ala-D-Ala)-di-trans,octa-cis-undecaprenyl diphosphate + UDP-N-acetyl-alpha-D-glucosamine = beta-D-GlcNAc-(1-&gt;4)-Mur2Ac(oyl-L-Ala-gamma-D-Glu-L-Lys-D-Ala-D-Ala)-di-trans,octa-cis-undecaprenyl diphosphate + UDP + H(+). It functions in the pathway cell wall biogenesis; peptidoglycan biosynthesis. Its function is as follows. Cell wall formation. Catalyzes the transfer of a GlcNAc subunit on undecaprenyl-pyrophosphoryl-MurNAc-pentapeptide (lipid intermediate I) to form undecaprenyl-pyrophosphoryl-MurNAc-(pentapeptide)GlcNAc (lipid intermediate II). In Streptococcus pneumoniae (strain Hungary19A-6), this protein is UDP-N-acetylglucosamine--N-acetylmuramyl-(pentapeptide) pyrophosphoryl-undecaprenol N-acetylglucosamine transferase.